The chain runs to 262 residues: 3-methyl-2-oxobutanoate hydroxymethyltransferase (262 aa).

Mg(2+) is bound by residues D42 and D81. Residues 42–43 (DS), D81, and K110 each bind 3-methyl-2-oxobutanoate. A Mg(2+)-binding site is contributed by E112. The Proton acceptor role is filled by E179.

Belongs to the PanB family. In terms of assembly, homodecamer; pentamer of dimers. Requires Mg(2+) as cofactor.

It localises to the cytoplasm. It catalyses the reaction 3-methyl-2-oxobutanoate + (6R)-5,10-methylene-5,6,7,8-tetrahydrofolate + H2O = 2-dehydropantoate + (6S)-5,6,7,8-tetrahydrofolate. Its pathway is cofactor biosynthesis; (R)-pantothenate biosynthesis; (R)-pantoate from 3-methyl-2-oxobutanoate: step 1/2. Its function is as follows. Catalyzes the reversible reaction in which hydroxymethyl group from 5,10-methylenetetrahydrofolate is transferred onto alpha-ketoisovalerate to form ketopantoate. This is 3-methyl-2-oxobutanoate hydroxymethyltransferase from Methylobacillus flagellatus (strain ATCC 51484 / DSM 6875 / VKM B-1610 / KT).